Consider the following 206-residue polypeptide: Ras-related protein Ral-A (206 aa).

Residues 24-29 (GVGKSA), 40-46 (VEDYEPT), and 127-130 (NKSD) contribute to the GTP site. The Effector region motif lies at 43-51 (YEPTKADSY). (Microbial infection) O-linked (Glc) threonine; by P.sordellii toxin TcsL glycosylation is present at Thr46. At Ser194 the chain carries Phosphoserine; by AURKA. Cys203 carries the cysteine methyl ester modification. Cys203 carries S-geranylgeranyl cysteine lipidation. A propeptide spans 204-206 (CIL) (removed in mature form).

It belongs to the small GTPase superfamily. Ras family. In terms of assembly, interacts (via effector domain) with RALBP1; during mitosis, recruits RALBP1 to the mitochondrion where it promotes DNM1L phosphorylation and mitochondrial fission. Interacts with EXOC2/Sec5 and EXOC8/Exo84; binding to EXOC2 and EXOC8 is mutually exclusive. Interacts with Clostridium exoenzyme C3. Interacts with RALGPS1. Interacts with LPAR1 and LPAR2. Interacts with GRK2 in response to LPAR1 activation. RALA and GRK2 binding to LPAR1 is mutually exclusive. Interacts with CDC42. Post-translationally, phosphorylated. Phosphorylation at Ser-194 by AURKA/Aurora kinase A, during mitosis, induces RALA localization to the mitochondrion where it regulates mitochondrial fission. Prenylation is essential for membrane localization. The geranylgeranylated form and the farnesylated mutant do not undergo alternative prenylation in response to geranylgeranyltransferase I inhibitors (GGTIs) and farnesyltransferase I inhibitors (FTIs). In terms of processing, (Microbial infection) Glucosylated at Thr-46 by P.sordellii toxin TcsL from strain 6018. Monoglucosylation completely prevents the recognition of the downstream effector, blocking the GTPases in their inactive form. Not glucosylated by TcsL from strain VPI 9048.

It localises to the cell membrane. Its subcellular location is the cleavage furrow. The protein localises to the midbody. It is found in the midbody ring. The protein resides in the mitochondrion. The enzyme catalyses GTP + H2O = GDP + phosphate + H(+). Its activity is regulated as follows. Alternates between an inactive form bound to GDP and an active form bound to GTP. Activated by a guanine nucleotide-exchange factor (GEF) and inactivated by a GTPase-activating protein (GAP). Its function is as follows. Multifunctional GTPase involved in a variety of cellular processes including gene expression, cell migration, cell proliferation, oncogenic transformation and membrane trafficking. Accomplishes its multiple functions by interacting with distinct downstream effectors. Acts as a GTP sensor for GTP-dependent exocytosis of dense core vesicles. The RALA-exocyst complex regulates integrin-dependent membrane raft exocytosis and growth signaling. Key regulator of LPAR1 signaling and competes with GRK2 for binding to LPAR1 thus affecting the signaling properties of the receptor. Required for anchorage-independent proliferation of transformed cells. During mitosis, supports the stabilization and elongation of the intracellular bridge between dividing cells. Cooperates with EXOC2 to recruit other components of the exocyst to the early midbody. During mitosis, also controls mitochondrial fission by recruiting to the mitochondrion RALBP1, which mediates the phosphorylation and activation of DNM1L by the mitotic kinase cyclin B-CDK1. The sequence is that of Ras-related protein Ral-A (RALA) from Homo sapiens (Human).